The chain runs to 313 residues: Cytosolic Fe-S cluster assembly factor NUBP1 homolog (313 aa).

The interval 1 to 25 is disordered; sequence MSDVPDDANAGCPGTGSAGAGKASG. The [4Fe-4S] cluster site is built by C12, C26, C29, and C35. 66 to 73 is an ATP binding site; sequence GKGGVGKS. [4Fe-4S] cluster-binding residues include C240 and C243.

This sequence belongs to the Mrp/NBP35 ATP-binding proteins family. NUBP1/NBP35 subfamily. In terms of assembly, heterotetramer of 2 NUBP1 and 2 NUBP2 chains. It depends on [4Fe-4S] cluster as a cofactor. Expressed in head amphid and labial ciliated sensory neurons and tail phasmid ciliated chemosensory neurons.

It is found in the cytoplasm. Its subcellular location is the cell projection. Functionally, component of the cytosolic iron-sulfur (Fe/S) protein assembly (CIA) machinery. Required for maturation of extramitochondrial Fe-S proteins. The NUBP1-NUBP2 heterotetramer forms a Fe-S scaffold complex, mediating the de novo assembly of an Fe-S cluster and its transfer to target apoproteins. Regulates cilium formation and structure. The protein is Cytosolic Fe-S cluster assembly factor NUBP1 homolog of Caenorhabditis elegans.